The sequence spans 261 residues: uncharacterized protein (261 aa).

A signal peptide spans 1-22; that stretch reads MKSIKRIGLCISLLILIIFVTS. The N-palmitoyl cysteine moiety is linked to residue Cys23. Cys23 carries S-diacylglycerol cysteine lipidation.

It belongs to the staphylococcal tandem lipoprotein family.

It is found in the cell membrane. This is an uncharacterized protein from Staphylococcus aureus (strain USA300).